Consider the following 80-residue polypeptide: RNA-binding protein Hfq (80 aa).

The Sm domain maps to 10-69 (DPFLNVLRKEHIPVSIYLVNGIKLQGHIDSFDQYVVLLRNSVTQMVYKHAISTIVPGKAV).

The protein belongs to the Hfq family. In terms of assembly, homohexamer.

In terms of biological role, RNA chaperone that binds small regulatory RNA (sRNAs) and mRNAs to facilitate mRNA translational regulation in response to envelope stress, environmental stress and changes in metabolite concentrations. Also binds with high specificity to tRNAs. The sequence is that of RNA-binding protein Hfq from Nitrosomonas eutropha (strain DSM 101675 / C91 / Nm57).